The primary structure comprises 1383 residues: DNA-directed RNA polymerase subunit beta (1383 aa).

Belongs to the RNA polymerase beta chain family. In terms of assembly, the RNAP catalytic core consists of 2 alpha, 1 beta, 1 beta' and 1 omega subunit. When a sigma factor is associated with the core the holoenzyme is formed, which can initiate transcription.

The enzyme catalyses RNA(n) + a ribonucleoside 5'-triphosphate = RNA(n+1) + diphosphate. Functionally, DNA-dependent RNA polymerase catalyzes the transcription of DNA into RNA using the four ribonucleoside triphosphates as substrates. This chain is DNA-directed RNA polymerase subunit beta, found in Bartonella quintana (strain Toulouse) (Rochalimaea quintana).